A 1031-amino-acid chain; its full sequence is Protein translocase subunit SecA (1031 aa).

ATP-binding positions include Gln-143, 161 to 165 (GEGKT), and Asp-662. 4 residues coordinate Zn(2+): Cys-1015, Cys-1017, Cys-1026, and Cys-1027.

The protein belongs to the SecA family. In terms of assembly, monomer and homodimer. Part of the essential Sec protein translocation apparatus which comprises SecA, SecYEG and auxiliary proteins SecDF. Other proteins may also be involved. Requires Zn(2+) as cofactor.

It is found in the cell inner membrane. It localises to the cytoplasm. The enzyme catalyses ATP + H2O + cellular proteinSide 1 = ADP + phosphate + cellular proteinSide 2.. Functionally, part of the Sec protein translocase complex. Interacts with the SecYEG preprotein conducting channel. Has a central role in coupling the hydrolysis of ATP to the transfer of proteins into and across the cell membrane, serving as an ATP-driven molecular motor driving the stepwise translocation of polypeptide chains across the membrane. In Chlorobaculum tepidum (strain ATCC 49652 / DSM 12025 / NBRC 103806 / TLS) (Chlorobium tepidum), this protein is Protein translocase subunit SecA.